We begin with the raw amino-acid sequence, 115 residues long: UPF0125 protein VP0646 (115 aa).

Residues 92-115 are disordered; sequence RAEQAKAAGNADPVTGGKPNALRK.

Belongs to the UPF0125 (RnfH) family.

The protein is UPF0125 protein VP0646 of Vibrio parahaemolyticus serotype O3:K6 (strain RIMD 2210633).